Consider the following 184-residue polypeptide: Probable type 3 secretion system regulator AscH (184 aa).

Positions 1–25 (MKIEGSDQLGGEQPQRQPLPPESMA) are disordered.

It belongs to the YopR family.

It localises to the secreted. In terms of biological role, may be involved in the regulation of the assembly of the type III secretion system (T3SS), also called injectisome, which is used to inject bacterial effector proteins into eukaryotic host cells. May control the polymerization of the needle. This is Probable type 3 secretion system regulator AscH from Aeromonas salmonicida subsp. salmonicida.